Here is a 151-residue protein sequence, read N- to C-terminus: MTNNKEERLKQLTRMQYEVTQKNGTEPPFQNEYWDLHEDGIYVDIVSGKPLFSSLDKFDAHCGWPSFTKPVDAGEIEEKLDTSHGMIRTEVRSKSADSHLGHVFPDGPGPDGLRYCINSAALRFVPKDDLEKEGYGEYVKLFERKKSGEES.

The MsrB domain maps to 5 to 127 (KEERLKQLTR…NSAALRFVPK (123 aa)). Cys116 acts as the Nucleophile in catalysis.

The protein belongs to the MsrB Met sulfoxide reductase family.

It carries out the reaction L-methionyl-[protein] + [thioredoxin]-disulfide + H2O = L-methionyl-(R)-S-oxide-[protein] + [thioredoxin]-dithiol. The polypeptide is Peptide methionine sulfoxide reductase MsrB (Bacillus licheniformis (strain ATCC 14580 / DSM 13 / JCM 2505 / CCUG 7422 / NBRC 12200 / NCIMB 9375 / NCTC 10341 / NRRL NRS-1264 / Gibson 46)).